The sequence spans 309 residues: Olfactory receptor 10J5 (309 aa).

At 1 to 27 (MQRNNFTEVIEFVFLGFSSFGKHQITL) the chain is on the extracellular side. A helical membrane pass occupies residues 28 to 48 (FVVFLTIYILTLAGNIIIVTI). Residues 49–57 (THIDHHLHT) lie on the Cytoplasmic side of the membrane. The helical transmembrane segment at 58-78 (PMYFFLSMLASSETVYTLVIV) threads the bilayer. Topologically, residues 79 to 84 (PRMLSS) are extracellular. Residues 85 to 105 (LIFYNLPISLAGCATQMFFFV) form a helical membrane-spanning segment. An intrachain disulfide couples Cys-97 to Cys-178. Residues 106–131 (TLATNNCFLLTAMGYDRYVAICNPLR) lie on the Cytoplasmic side of the membrane. A helical membrane pass occupies residues 132–152 (YTIIMSKGMCALLVCGSLGTG). Residues 153–203 (LVMAVLHVPAMFHLPFCGTVVEHFFCDIYPVMKLSCVDTTVNEIINYGVSS) lie on the Extracellular side of the membrane. The chain crosses the membrane as a helical span at residues 204–224 (FVILVPIGLIFISYVLIVSSI). Residues 225–235 (LKIVSTEGQKK) lie on the Cytoplasmic side of the membrane. Residues 236–256 (AFATCASHLTVVIVHYGCASI) form a helical membrane-spanning segment. Over 257 to 270 (AYLKPKSESSVEKD) the chain is Extracellular. The helical transmembrane segment at 271-291 (LLLSVTYTIITPLLNPVVYSL) threads the bilayer. At 292 to 309 (RNKEVKDALCRAVGRNTS) the chain is on the cytoplasmic side.

The protein belongs to the G-protein coupled receptor 1 family. In terms of tissue distribution, expressed in the olfactory epithelium as well as in the testis. Expressed in round spermatids during stages VI-VIII of spermatogenesis.

It localises to the cell membrane. Functionally, olfactory receptor. Activated by the synthetic floral odorant, lyral, and by alpha-cedrene, a sesquiterpene constituent of cedarwood oil. Its activation increases intracellular Ca(2+). Acts as a key regulator of myogenesis through its actions on cell migration and adhesion by activating the Ca(2+)-dependent AKT signal transduction pathway. Also acts as a regulator of angiogenesis. Moreover, plays a role in the regulation of lipid accumulation in hepatocytes via the cAMP-PKA pathway. Involved in sperm chemotaxis and motility. This chain is Olfactory receptor 10J5, found in Mus musculus (Mouse).